Reading from the N-terminus, the 378-residue chain is Anhydro-N-acetylmuramic acid kinase (378 aa).

9–16 (GTSADGID) serves as a coordination point for ATP.

This sequence belongs to the anhydro-N-acetylmuramic acid kinase family.

The catalysed reaction is 1,6-anhydro-N-acetyl-beta-muramate + ATP + H2O = N-acetyl-D-muramate 6-phosphate + ADP + H(+). It functions in the pathway amino-sugar metabolism; 1,6-anhydro-N-acetylmuramate degradation. The protein operates within cell wall biogenesis; peptidoglycan recycling. Functionally, catalyzes the specific phosphorylation of 1,6-anhydro-N-acetylmuramic acid (anhMurNAc) with the simultaneous cleavage of the 1,6-anhydro ring, generating MurNAc-6-P. Is required for the utilization of anhMurNAc either imported from the medium or derived from its own cell wall murein, and thus plays a role in cell wall recycling. This is Anhydro-N-acetylmuramic acid kinase from Synechococcus sp. (strain ATCC 27144 / PCC 6301 / SAUG 1402/1) (Anacystis nidulans).